The chain runs to 613 residues: UvrABC system protein C (613 aa).

The 79-residue stretch at 29-107 (DVAGVYKMLG…IKTLKPKYNI (79 aa)) folds into the GIY-YIG domain. Residues 217–252 (KELQRELFDSMRKFSDNLDYESAMVYRDRLQALKSI) enclose the UVR domain.

It belongs to the UvrC family. Interacts with UvrB in an incision complex.

Its subcellular location is the cytoplasm. Its function is as follows. The UvrABC repair system catalyzes the recognition and processing of DNA lesions. UvrC both incises the 5' and 3' sides of the lesion. The N-terminal half is responsible for the 3' incision and the C-terminal half is responsible for the 5' incision. This is UvrABC system protein C from Anaplasma marginale (strain St. Maries).